Here is a 44-residue protein sequence, read N- to C-terminus: Large ribosomal subunit protein bL34 (44 aa).

It belongs to the bacterial ribosomal protein bL34 family.

The protein is Large ribosomal subunit protein bL34 of Variovorax paradoxus (strain S110).